We begin with the raw amino-acid sequence, 774 residues long: FT-interacting protein 7 (774 aa).

Positions 1 to 17 (MMQRPFRPEEYSLKETS) are enriched in basic and acidic residues. Residues 1–25 (MMQRPFRPEEYSLKETSPHLGGGAA) are disordered. C2 domains are found at residues 23–143 (GAAG…PQWY), 182–305 (IPGD…SQWY), and 346–472 (YSSD…THAY). Positions 56, 62, 109, 111, and 116 each coordinate Ca(2+). Transmembrane regions (helical) follow at residues 575–595 (IMGVLSPLIAVAKWFDQICHW), 606–626 (ILFVILVLYPELILPTIFLYL), and 714–734 (ATALFVTFCFVAAIVLYVTPF).

Belongs to the MCTP family. In terms of assembly, interacts with OSH1. Requires Ca(2+) as cofactor. Expressed in roots, stems, lemma, palea, pistils and ovules. Expressed at low levels in leaves.

Its subcellular location is the cell membrane. Its function is as follows. Promotes nuclear translocation of the transcription factor OSH1, which directly suppresses the auxin biosynthetic gene YUCCA4 during the late development of anthers. Reduction of auxin levels at late stage of anther development, after meiosis of microspore mother cells, is necessary for normal anther dehiscence and seed setting. Required for jasmonate (JA) biosynthetic genes expression and JA production in anthers. The polypeptide is FT-interacting protein 7 (Oryza sativa subsp. japonica (Rice)).